Consider the following 121-residue polypeptide: uncharacterized protein (121 aa).

2 disordered regions span residues 1–28 (MGCASAKHVATVQNEEEAQKGKNYQNGD) and 60–82 (QENLEKSASSNVRLKTNKEVPGL). Ser-95 and Ser-115 each carry phosphoserine.

In terms of tissue distribution, expressed in spleen, prostate, testis and uterus.

This is an uncharacterized protein from Homo sapiens (Human).